A 453-amino-acid polypeptide reads, in one-letter code: Membrane-bound acylglycerophosphatidylinositol O-acyltransferase mboa-7 (453 aa).

A run of 7 helical transmembrane segments spans residues 4–24, 36–56, 79–99, 154–174, 195–215, 220–240, and 244–264; these read ILGL…FSFG, ILAS…PKIV, LYVF…HYIL, AYFY…QMLI, VRLL…PLDI, AIWE…FVVF, and VYSA…GIYP. Residue asparagine 319 is glycosylated (N-linked (GlcNAc...) asparagine). The active site involves histidine 350. The next 2 helical transmembrane spans lie at 354–374 and 421–441; these read AGYF…DVIF and FWSS…IYSA.

Belongs to the membrane-bound acyltransferase family. As to expression, expressed ubiquitously throughout development from early embryo to larval and adult stages. In adults, strongly expressed in pharyngeal muscle, body wall muscle, vulval cells, distal tip cells, intestinal cells and spermatheca.

It localises to the membrane. It carries out the reaction 1-octadecanoyl-sn-glycero-3-phospho-(1D-myo-inositol) + (5Z,8Z,11Z,14Z,17Z)-eicosapentaenoyl-CoA = 1-octadecanoyl-2-(5Z,8Z,11Z,14Z,17Z-eicosapentaenoyl)-sn-glycero-3-phospho-(1D-myo-inositol) + CoA. It catalyses the reaction a 1-acyl-sn-glycero-3-phospho-(1D-myo-inositol) + (5Z,8Z,11Z,14Z,17Z)-eicosapentaenoyl-CoA = a 1-acyl-2-(5Z,8Z,11Z,14Z,17Z-eicosapentaenoyl)-sn-glycero-3-phospho-(1D-myo-inositol) + CoA. The catalysed reaction is a 1-acyl-sn-glycero-3-phospho-(1D-myo-inositol) + (5Z,8Z,11Z,14Z)-eicosatetraenoyl-CoA = a 1-acyl-2-(5Z,8Z,11Z,14Z-eicosatetraenoyl)-sn-glycero-3-phospho-(1D-myo-inositol) + CoA. The protein operates within lipid metabolism; phospholipid metabolism. Acyltransferase which mediates the conversion of lysophosphatidylinositol (1-acyl-sn-glycero-3-phosphatidylinositol or LPI) into phosphatidylinositol (1,2-diacyl-sn-glycero-3-phosphoinositol or PI) (LPIAT activity). Prefers sn-2-LPI rather than sn-1-LPI as the acyl acceptor. Lysophospholipid acyltransferases (LPLATs) catalyze the reacylation step of the phospholipid remodeling pathway also known as the Lands cycle. Involved in the selective incorporation of arachidonoyl-CoA ((5Z,8Z,11Z,14Z)-eicosatetraenoyl-CoA) and (5Z,8Z,11Z,14Z,17Z)-eicosapentaenoyl-CoA (EPA-CoA) into PI. Besides its role in biomembranes, PI is a precursor of PI 3-phosphate (PIP3) and its fatty acid composition has an important role in PI3P signaling. In Caenorhabditis elegans, this protein is Membrane-bound acylglycerophosphatidylinositol O-acyltransferase mboa-7.